A 506-amino-acid polypeptide reads, in one-letter code: ATP synthase subunit alpha, mitochondrial (506 aa).

171–178 contributes to the ATP binding site; it reads GDRQTGKT.

The protein belongs to the ATPase alpha/beta chains family. In terms of assembly, F-type ATPases have 2 components, CF(1) - the catalytic core - and CF(0) - the membrane proton channel. CF(1) has five subunits: alpha(3), beta(3), gamma(1), delta(1), epsilon(1). CF(0) has three main subunits: a, b and c.

It localises to the mitochondrion. It is found in the mitochondrion inner membrane. Mitochondrial membrane ATP synthase (F(1)F(0) ATP synthase or Complex V) produces ATP from ADP in the presence of a proton gradient across the membrane which is generated by electron transport complexes of the respiratory chain. F-type ATPases consist of two structural domains, F(1) - containing the extramembraneous catalytic core, and F(0) - containing the membrane proton channel, linked together by a central stalk and a peripheral stalk. During catalysis, ATP synthesis in the catalytic domain of F(1) is coupled via a rotary mechanism of the central stalk subunits to proton translocation. Subunits alpha and beta form the catalytic core in F(1). Rotation of the central stalk against the surrounding alpha(3)beta(3) subunits leads to hydrolysis of ATP in three separate catalytic sites on the beta subunits. Subunit alpha does not bear the catalytic high-affinity ATP-binding sites. In Beta vulgaris (Sugar beet), this protein is ATP synthase subunit alpha, mitochondrial (ATPA).